Consider the following 176-residue polypeptide: ATP-dependent protease subunit HslV (176 aa).

T2 is a catalytic residue. The Na(+) site is built by G158, C161, and T164.

Belongs to the peptidase T1B family. HslV subfamily. As to quaternary structure, a double ring-shaped homohexamer of HslV is capped on each side by a ring-shaped HslU homohexamer. The assembly of the HslU/HslV complex is dependent on binding of ATP.

Its subcellular location is the cytoplasm. The catalysed reaction is ATP-dependent cleavage of peptide bonds with broad specificity.. Allosterically activated by HslU binding. In terms of biological role, protease subunit of a proteasome-like degradation complex believed to be a general protein degrading machinery. The sequence is that of ATP-dependent protease subunit HslV from Pasteurella multocida (strain Pm70).